The primary structure comprises 247 residues: tRNA pseudouridine synthase A (247 aa).

Asp53 serves as the catalytic Nucleophile. Residue Tyr111 coordinates substrate.

This sequence belongs to the tRNA pseudouridine synthase TruA family. As to quaternary structure, homodimer.

It carries out the reaction uridine(38/39/40) in tRNA = pseudouridine(38/39/40) in tRNA. Its function is as follows. Formation of pseudouridine at positions 38, 39 and 40 in the anticodon stem and loop of transfer RNAs. This chain is tRNA pseudouridine synthase A, found in Lacticaseibacillus casei (strain BL23) (Lactobacillus casei).